The following is a 218-amino-acid chain: Ribosomal RNA small subunit methyltransferase G (218 aa).

Residues Gly86, Leu91, 137-138 (AE), and Arg153 each bind S-adenosyl-L-methionine.

This sequence belongs to the methyltransferase superfamily. RNA methyltransferase RsmG family.

The protein resides in the cytoplasm. The enzyme catalyses guanosine(527) in 16S rRNA + S-adenosyl-L-methionine = N(7)-methylguanosine(527) in 16S rRNA + S-adenosyl-L-homocysteine. Functionally, specifically methylates the N7 position of guanine in position 527 of 16S rRNA. The chain is Ribosomal RNA small subunit methyltransferase G from Nitratidesulfovibrio vulgaris (strain ATCC 29579 / DSM 644 / CCUG 34227 / NCIMB 8303 / VKM B-1760 / Hildenborough) (Desulfovibrio vulgaris).